The chain runs to 110 residues: Protein ripply3 (110 aa).

The WRPW motif signature appears at 18–21 (WRPW). Positions 50 to 85 (HPVRLFLPRSRMQEYLSRLGSSVLASFPVQATLHFY) are ripply homology domain. Positions 87-99 (DEDSSSEEEEDEE) are enriched in acidic residues. The segment at 87-110 (DEDSSSEEEEDEEHANTRCRLWRP) is disordered.

Belongs to the ripply family.

The protein localises to the nucleus. Functionally, probable transcriptional regulator involved in developmental processes. The protein is Protein ripply3 (ripply3) of Danio rerio (Zebrafish).